Consider the following 271-residue polypeptide: MLPYPQIDPVALAIGPLKIHWYGLMYLVGIGGAWLLASRRLNRFDPTWTKEKLSDLVFWLSMGVIVGGRLGYVLFYDLSAYIANPTLIFEVWKGGMSFHGGFIGVMLAALWFGKRNGKSFFQLMDFVAPMVPIGLGAGRIGNFINAELWGKATDVPWAMVFPPFSDPAQLPRHPSQLYQFALEGVALFLILWLFSRKPRPTMAVSGMFALFYGIFRFIVEFVRVPDAQLGYLAWNWLTMGQVLCVPMIIGGLFLIWLAYHRAPAAPVAPTA.

The next 7 membrane-spanning stretches (helical) occupy residues Val10–Ile30, Leu56–Tyr76, Trp92–Phe112, Phe120–Ile140, Pro174–Phe194, Met202–Val222, and Leu237–Leu257. An a 1,2-diacyl-sn-glycero-3-phospho-(1'-sn-glycerol)-binding site is contributed by Arg139.

This sequence belongs to the Lgt family.

The protein resides in the cell inner membrane. It catalyses the reaction L-cysteinyl-[prolipoprotein] + a 1,2-diacyl-sn-glycero-3-phospho-(1'-sn-glycerol) = an S-1,2-diacyl-sn-glyceryl-L-cysteinyl-[prolipoprotein] + sn-glycerol 1-phosphate + H(+). Its pathway is protein modification; lipoprotein biosynthesis (diacylglyceryl transfer). Catalyzes the transfer of the diacylglyceryl group from phosphatidylglycerol to the sulfhydryl group of the N-terminal cysteine of a prolipoprotein, the first step in the formation of mature lipoproteins. The protein is Phosphatidylglycerol--prolipoprotein diacylglyceryl transferase of Pseudomonas fluorescens (strain Pf0-1).